Consider the following 63-residue polypeptide: Keratin-associated protein 8-1 (63 aa).

The 12 X 2 AA repeats of G-[YCGS] stretch occupies residues 12 to 54 (PGCYWGSYGYPLGYSVGCGYGSTYSPVGYGFGYGYNGCGAFGY).

This sequence belongs to the KRTAP type 8 family. Interacts with hair keratins. In terms of tissue distribution, is essentially restricted to only one vertical half of the hair forming compartment and in beard hairs is absent from the central medulla.

Functionally, in the hair cortex, hair keratin intermediate filaments are embedded in an interfilamentous matrix, consisting of hair keratin-associated proteins (KRTAP), which are essential for the formation of a rigid and resistant hair shaft through their extensive disulfide bond cross-linking with abundant cysteine residues of hair keratins. The matrix proteins include the high-sulfur and high-glycine-tyrosine keratins. The chain is Keratin-associated protein 8-1 (KRTAP8-1) from Homo sapiens (Human).